The sequence spans 512 residues: Acid-sensing ion channel 2 (512 aa).

Topologically, residues M1–P37 are cytoplasmic. Phosphoserine occurs at positions 8 and 11. Residues L38–V58 form a helical membrane-spanning segment. Residues E59–A427 lie on the Extracellular side of the membrane. 6 cysteine pairs are disulfide-bonded: C92–C193, C289–C364, C307–C360, C311–C358, C320–C342, and C322–C334. Residues N365 and N392 are each glycosylated (N-linked (GlcNAc...) asparagine). The chain crosses the membrane as a helical span at residues L428–L448. A GAS motif; ion selectivity filter motif is present at residues G441–S443. Residues E449 to C512 lie on the Cytoplasmic side of the membrane.

Belongs to the amiloride-sensitive sodium channel (TC 1.A.6) family. ASIC2 subfamily. Can form homotrimers. Heterotrimer; forms functional heterotrimers producing channel with different properties. Forms heterotrimers with ASIC1; while ASIC1 determines current amplitude, ASIC2 influences the properties of the current. Forms heterotrimers with ASIC3; resulting in channels with distinct properties. Interacts with STOM; STOM regulates the gating of ASIC2-containing channels. Interacts with PICK1; promotes ASIC3 phosphorylation by PKC and activation of ASIC2/ASIC3 heterotrimers. Expressed by sensory neurons. Expressed by nociceptive sensory neurons, spiral ganglion (SG) neurons and the retina (at protein level). Expressed in outer nuclear layer of retina (photoreceptors) and to a lower extent in distal and proximal inner nuclear layer.

Its subcellular location is the cell membrane. The catalysed reaction is Na(+)(in) = Na(+)(out). The enzyme catalyses K(+)(in) = K(+)(out). It catalyses the reaction Li(+)(in) = Li(+)(out). With respect to regulation, inhibited by the diuretic drug amiloride. In terms of biological role, forms pH-gated trimeric sodium channels that act as postsynaptic excitatory sensors in the nervous system. Upon extracellular acidification, these channels generate rapid, transient inward currents that fully desensitize. Highly selective for sodium, they are permeable to other cations. By forming heterotrimeric channels with ASIC1, could contribute to synaptic plasticity, learning, and memory. Additionally, as acid sensors at nerve terminals, plays a role in mechanosensation and phototransduction. Functionally, has no pH-gated sodium channel activity per se but can associate with other ASICs to produce functional channels with specific properties. This is Acid-sensing ion channel 2 from Mus musculus (Mouse).